Reading from the N-terminus, the 908-residue chain is Flap endonuclease GEN homolog 1 (908 aa).

An XPG-N domain region spans residues 2-96; sequence GVNDLWQILE…SKRNQSRYGS (95 aa). Mg(2+) is bound by residues D30, E75, E134, E136, D155, D157, and D208. The XPG-I domain stretch occupies residues 122–208; sequence ECLGIPWVQA…VGLAILLGCD (87 aa). The interval 208 to 384 is 5'-3' exonuclease domain; sequence DYLPKGVPGV…LLVLLTHYDM (177 aa). The chromodomain stretch occupies residues 390–464; it reads GSRNSNQLQP…VYQKQKLEIK (75 aa). Phosphoserine is present on residues S801 and S802.

It belongs to the XPG/RAD2 endonuclease family. GEN subfamily. As to quaternary structure, largely monomeric, dimerizes on the Holliday junction and the first nick occurs upon dimerization at the junction. Mg(2+) is required as a cofactor.

The protein localises to the nucleus. Functionally, endonuclease which resolves Holliday junctions (HJs) by the introduction of symmetrically related cuts across the junction point, to produce nicked duplex products in which the nicks can be readily ligated. Four-way DNA intermediates, also known as Holliday junctions, are formed during homologous recombination and DNA repair, and their resolution is necessary for proper chromosome segregation. Cleaves HJs by a nick and counter-nick mechanism involving dual coordinated incisions that lead to the formation of ligatable nicked duplex products. Cleavage of the first strand is rate limiting, while second strand cleavage is rapid. Largely monomeric, dimerizes on the HJ and the first nick occurs upon dimerization at the junction. Efficiently cleaves both single and double HJs contained within large recombination intermediates. Exhibits a weak sequence preference for incision between two G residues that reside in a T-rich region of DNA. Also has endonuclease activity on 5'-flap and replication fork (RF) DNA substrates. This Homo sapiens (Human) protein is Flap endonuclease GEN homolog 1 (GEN1).